The following is a 254-amino-acid chain: Glutamate racemase (254 aa).

Residues 7–8 and 39–40 each bind substrate; these read DS and YG. Cys70 (proton donor/acceptor) is an active-site residue. Substrate contacts are provided by residues 71–72 and Glu147; that span reads NT. Cys178 serves as the catalytic Proton donor/acceptor. A substrate-binding site is contributed by 179 to 180; it reads TH.

The protein belongs to the aspartate/glutamate racemases family. Homodimer.

The catalysed reaction is L-glutamate = D-glutamate. The protein operates within cell wall biogenesis; peptidoglycan biosynthesis. Its function is as follows. Provides the (R)-glutamate required for cell wall biosynthesis. Converts L- or D-glutamate to D- or L-glutamate, respectively, but not other amino acids such as alanine, aspartate, and glutamine. This Aquifex pyrophilus protein is Glutamate racemase.